The sequence spans 406 residues: Zinc metalloprotease Rip1 (406 aa).

Residues 1–21 (MMFGIGIVLFALAILVSVALH) traverse the membrane as a helical segment. His-21 is a Zn(2+) binding site. Residue Glu-22 is part of the active site. Residue His-25 participates in Zn(2+) binding. The helical transmembrane segment at 108–128 (PAMNFVIGLVLIYGIAIVWGL) threads the bilayer. Residues 125–209 (VWGLPNLHQP…RIEFKRDGRV (85 aa)) form the PDZ domain. Asp-206 contacts Zn(2+). A run of 2 helical transmembrane segments spans residues 327 to 349 (NFVL…IAVA) and 375 to 395 (LMPA…LTVT).

Belongs to the peptidase M50B family. Zn(2+) serves as cofactor.

It is found in the cell membrane. With respect to regulation, proteolysis is inhibited by Wag31; when Wag31 is non-functional oxidative stress increases proteolysis. Its function is as follows. A probable intramembrane site-2 protease (S2P) that cleaves type-2 transmembrane proteins within their membrane-spanning domains. Degrades PbpB (PBP3, FtsI) under conditions of oxidatives stress; degradation is inhibited by Wag31-PbpB interaction. Also cleaves anti-sigma factors RskA, RslA and RslM. Site-1 proteases have not yet been identified in this organism. Regulated intramembrane proteolysis (RIP) occurs when an extracytoplasmic signal (possibly oxidative stress) triggers a concerted proteolytic cascade to transmit information and elicit cellular responses. The membrane-spanning regulatory substrate protein (includes anti-sigma factors RskA, RslA, RsmA, and PbpB) is first cut extracytoplasmically (site-1 protease, S1P), then within the membrane itself (site-2 protease, S2P, this entry), while cytoplasmic proteases finish degrading the regulatory protein, liberating the effector protein (ECF sigma factors SigK, SigL and SigM). The protein is Zinc metalloprotease Rip1 (rip1) of Mycolicibacterium smegmatis (strain ATCC 700084 / mc(2)155) (Mycobacterium smegmatis).